A 204-amino-acid polypeptide reads, in one-letter code: FMN-dependent NADH:quinone oxidoreductase (204 aa).

FMN-binding positions include serine 10, 16 to 18 (SIS), and 96 to 99 (MYNF).

It belongs to the azoreductase type 1 family. In terms of assembly, homodimer. Requires FMN as cofactor.

It carries out the reaction 2 a quinone + NADH + H(+) = 2 a 1,4-benzosemiquinone + NAD(+). It catalyses the reaction N,N-dimethyl-1,4-phenylenediamine + anthranilate + 2 NAD(+) = 2-(4-dimethylaminophenyl)diazenylbenzoate + 2 NADH + 2 H(+). Its function is as follows. Quinone reductase that provides resistance to thiol-specific stress caused by electrophilic quinones. Also exhibits azoreductase activity. Catalyzes the reductive cleavage of the azo bond in aromatic azo compounds to the corresponding amines. The sequence is that of FMN-dependent NADH:quinone oxidoreductase from Herminiimonas arsenicoxydans.